A 270-amino-acid polypeptide reads, in one-letter code: MFVSPMLLHSIKEPFNDENYITELKFDGIRLILSKFDNQIKLYTRHNNEVTSKFPELMDLDIPDGTVLDGEVIVAASGGAPDFEAVMERFMSKKSAHNIVYCVFDVIYKDGQSIAAKPLTERKTVLNSLELDHPNVFVIEGTQGNGLAYFNLAKEKNLEGIVIKKANSPYEINKRSHNWLKVINYDYTEVLITGYTKKDIKFLLSYPDGTSAGFMEFMPHAERTKFHSMKQVKSESDEYVFIEPILCNVKHRFKTKHGKLRIPSFESWRV.

The active-site N6-AMP-lysine intermediate is the K25.

It belongs to the ATP-dependent DNA ligase family.

This is SPbeta prophage-derived DNA ligase-like protein LigB (ligB) from Bacillus subtilis (strain 168).